The sequence spans 1447 residues: Adhesion G protein-coupled receptor L3 (1447 aa).

A signal peptide spans 1 to 19 (MWPSQLLIFMMLLAPIIHA). Topologically, residues 20 to 862 (FSRAPIPMAV…VKHSDAVHDL (843 aa)) are extracellular. One can recognise an SUEL-type lectin domain in the interval 35-124 (SCESYPIELR…KYLEVQYECV (90 aa)). 5 disulfide bridges follow: cysteine 36-cysteine 66, cysteine 45-cysteine 123, cysteine 78-cysteine 110, cysteine 91-cysteine 97, and cysteine 135-cysteine 317. Asparagine 93 is a glycosylation site (N-linked (GlcNAc...) asparagine). Residues 134 to 393 (LCPGLLKGVY…VVKYSLDFGP (260 aa)) form the Olfactomedin-like domain. The segment at 249-279 (YHDTSPYRWGGKSDIDLAVDENGLWVIYATE) is interaction with FLRT3. 4 residues coordinate Ca(2+): aspartate 264, asparagine 312, alanine 313, and valine 367. Residues 426-473 (DISTTGPLGMGSTTTSTTLRTTTLSPGRSTTPSVSGRRNRSTSTPSPA) are disordered. The segment covering 428 to 458 (STTGPLGMGSTTTSTTLRTTTLSPGRSTTPS) has biased composition (low complexity). Asparagine 464, asparagine 549, asparagine 746, asparagine 759, asparagine 804, and asparagine 830 each carry an N-linked (GlcNAc...) asparagine glycan. Residues 675–854 (DIVRENTDNI…AVLMAHVEVK (180 aa)) enclose the GAIN-B domain. 2 disulfide bridges follow: cysteine 805/cysteine 836 and cysteine 824/cysteine 838. Positions 805 to 854 (CSFWSYSKRTMTGYWSTQGCRLLTTNKTHTTCSCNHLTNFAVLMAHVEVK) are GPS. The segment at 842 to 855 (TNFAVLMAHVEVKH) is stachel. Residues 863–888 (LLDVITWVGILLSLVCLLICIFTFCF) traverse the membrane as a helical segment. Topologically, residues 889-896 (FRGLQSDR) are cytoplasmic. A helical membrane pass occupies residues 897 to 918 (NTIHKNLCISLFVAELLFLIGI). Residues 919 to 926 (NRTDQPIA) lie on the Extracellular side of the membrane. The helical transmembrane segment at 927-950 (CAVFAALLHFFFLAAFTWMFLEGV) threads the bilayer. Cysteine 927 and cysteine 999 are oxidised to a cystine. Topologically, residues 951-967 (QLYIMLVEVFESEHSRR) are cytoplasmic. A helical membrane pass occupies residues 968 to 990 (KYFYLVGYGMPALIVAVSAAVDY). Residues 991-1005 (RSYGTDKVCWLRLDT) lie on the Extracellular side of the membrane. Residues 1006-1027 (YFIWSFIGPATLIIMLNVIFLG) form a helical membrane-spanning segment. At 1028-1053 (IALYKMFHHTAILKPESGCLDNIKSW) the chain is on the cytoplasmic side. The chain crosses the membrane as a helical span at residues 1054–1073 (VIGAIALLCLLGLTWAFGLM). Residues 1074-1078 (YINES) are Extracellular-facing. Residue asparagine 1076 is glycosylated (N-linked (GlcNAc...) asparagine). Residues 1079–1104 (TVIMAYLFTIFNSLQGMFIFIFHCVL) traverse the membrane as a helical segment. At 1105–1447 (QKKVRKEYGK…KGPAHLVTSL (343 aa)) the chain is on the cytoplasmic side. The tract at residues 1123 to 1147 (GKSTESSIGSGKTSGSRTPGRYSTG) is disordered. Serine 1164 carries the phosphoserine modification. Residues 1423–1447 (IVPPNKDGTPPEGSSKGPAHLVTSL) form a disordered region. Positions 1442–1447 (HLVTSL) match the PDZ-binding motif.

Belongs to the G-protein coupled receptor 2 family. LN-TM7 subfamily. In terms of assembly, heterodimer of 2 chains generated by proteolytic processing; the large extracellular N-terminal fragment and the membrane-bound C-terminal fragment predominantly remain associated and non-covalently linked. Interacts (via olfactomedin-like domain) with FLRT1 (via extracellular domain). Interacts (via olfactomedin-like domain) with FLRT2 (via extracellular domain). Interacts (via olfactomedin-like domain) with FLRT3 (via extracellular domain); the interaction is direct. Interacts (via extracellular domain) with TENM1. Interacts (via extracellular domain) with TENM2. Interacts (via extracellular domain) with TENM3. Identified in a complex with FLRT3 and UNC5B; does not interact with UNC5B by itself. Identified in a complex with FLRT3 and UNC5D; does not interact with UNC5D by itself. As to quaternary structure, interacts (via PDZ-binding motif) with SHANK3. Interacts (via PDZ-binding motif) with DLG4. Autoproteolytically processed at the GPS region of the GAIN-B domain; this cleavage modulates receptor activity.

Its subcellular location is the cell membrane. The protein resides in the postsynaptic cell membrane. The protein localises to the cell projection. It localises to the axon. It is found in the cell junction. With respect to regulation, forms a heterodimer of 2 chains generated by proteolytic processing that remain associated through non-covalent interactions mediated by the GAIN-B domain. In the inactivated receptor, the Stachel sequence (also named stalk) is embedded in the GAIN-B domain, where it adopts a beta-strand conformation. On activation, the Stachel moves into the 7 transmembrane region and adopts a twisted hook-shaped configuration that forms contacts within the receptor, leading to coupling of a G-alpha protein, which activates signaling. The cleaved GAIN-B and N-terminal domains can then dissociate from the rest of the receptor. Functionally, orphan adhesion G-protein coupled receptor (aGPCR), which mediates synapse specificity. Ligand binding causes a conformation change that triggers signaling via guanine nucleotide-binding proteins (G proteins) and modulates the activity of downstream effectors. ADGRL3 is coupled with different classes of G alpha proteins, such as G(12)/G(13), G(s), G(i) or G(q), depending on the context. Coupling to G(12)/G(13) G proteins, which mediates the activation Rho small GTPases is the most efficient. Following G-protein coupled receptor activation, associates with cell adhesion molecules that are expressed at the surface of adjacent cells to direct synapse specificity. Specifically mediates the establishment of Schaffer-collateral synapses formed by CA3-region axons on CA1-region pyramidal neurons in the hippocampus. Localizes to postsynaptic spines in excitatory synapses in the S.oriens and S.radiatum and interacts with presynaptic cell adhesion molecules FLRT3 and TENM2, promoting synapse formation. Plays a role in the development of glutamatergic synapses in the cortex. Important in determining the connectivity rates between the principal neurons in the cortex. Orphan adhesion G-protein coupled receptor (aGPCR), which mediates synapse specificity. Ligand binding causes a conformation change that triggers signaling via guanine nucleotide-binding proteins (G proteins) and modulates the activity of downstream effectors, such as adenylate cyclase. Isoform 1 is specifically coupled to G(s) G proteins and mediates activation of adenylate cyclase activity. Following G-protein coupled receptor activation, undergoes liquid-liquid phase transition, associates with (1) cell adhesion molecules that are expressed at the surface of adjacent cells, as well as (2) PDZ-containing proteins, such as SHANK3 and DLG4, in the cytoplasm to direct synapse formation. The protein is Adhesion G protein-coupled receptor L3 of Homo sapiens (Human).